Here is a 369-residue protein sequence, read N- to C-terminus: Peptide chain release factor 1 (369 aa).

Q238 bears the N5-methylglutamine mark.

It belongs to the prokaryotic/mitochondrial release factor family. Post-translationally, methylated by PrmC. Methylation increases the termination efficiency of RF1.

Its subcellular location is the cytoplasm. Functionally, peptide chain release factor 1 directs the termination of translation in response to the peptide chain termination codons UAG and UAA. The polypeptide is Peptide chain release factor 1 (Parabacteroides distasonis (strain ATCC 8503 / DSM 20701 / CIP 104284 / JCM 5825 / NCTC 11152)).